Reading from the N-terminus, the 82-residue chain is Hydrogenase maturation factor HybG (82 aa).

It belongs to the HupF/HypC family.

It functions in the pathway protein modification; [NiFe] hydrogenase maturation. In terms of biological role, involved in the maturation of [NiFe] hydrogenases. Involved in the biosynthesis of the Fe(CN)(2)CO cofactor. HybG delivers iron-bound CO(2) to HypD where reduction to CO probably occurs. In complex with HypD, accepts the cyanide ligand generated by HypF and HypE, and also coordinates the carbon monoxide ligand. This chain is Hydrogenase maturation factor HybG (hybG), found in Escherichia coli O157:H7.